We begin with the raw amino-acid sequence, 455 residues long: MMSFSVLQVKRLQPELITPAKSTPQETKFLSDIDDQESLRVQIPIIMCYKDNPSLNKNRNPVKAIREALSRALVYYYPLAGRLREGPNRKLVVDCNGEGILFVEASADVTLEQLGDKILPPCPLLEEFLYNFPGSDGIIDCPLLLIQVTCLTCGGFILALRLNHTMCDAFGLLQFLTAIAEMARGAHAPSILPVWERELLFARNPPRITCAHHEYEDVIDHSDGSYTSSNQSNMVQRSFYFGAKEMRVLRKQIPRHLISTCSTFDLITACLWKCRTLALKINPKQAVRVSCTVNARGKHHNVRLPLGYYGNAFAFPAAVSKAEPLCKNPMGYALELVKKAKATMNEEYLRSVADLLVLRGRPQYSSTGSYLIVSDNTRAGFGDVNFGWGQPVFAGPAKALDLVSFYVQHKNNTEDGILVPMCLPSSAMERFQQEFEMITQEPKEDICNNLRSTSQ.

Active-site proton acceptor residues include histidine 164 and asparagine 385.

Belongs to the plant acyltransferase family.

Functionally, involved in the biosynthesis of volatile esters which confer ripe apple fruit flavor. Alcohol acyl transferase that can use a wide range of alcohols as substrate to produce esters. This chain is Alcohol acyl transferase 1 allele RGb, found in Malus domestica (Apple).